Here is a 604-residue protein sequence, read N- to C-terminus: Sulfite reductase [NADPH] flavoprotein alpha-component (604 aa).

The Flavodoxin-like domain occupies 66 to 204 (VTVLSASQTG…AADGWTGRIV (139 aa)). Residues 72-77 (SQTGNA), 119-122 (STQG), and 155-164 (LGDSSYPNFC) contribute to the FMN site. The segment at 212 to 231 (AKNRATPAPQTTPPAGLQTA) is disordered. Residues 216–231 (ATPAPQTTPPAGLQTA) show a composition bias toward low complexity. One can recognise an FAD-binding FR-type domain in the interval 239-453 (ADPFPAALLA…VERNDGFRLP (215 aa)). Residues threonine 327, glutamine 361, 391–394 (RLYS), 409–411 (TVG), and 424–427 (GGAS) each bind FAD. Residues 524-525 (SR), 530-534 (KIYVQ), and aspartate 566 contribute to the NADP(+) site. An FAD-binding site is contributed by tyrosine 604.

It belongs to the NADPH-dependent sulphite reductase flavoprotein subunit CysJ family. This sequence in the N-terminal section; belongs to the flavodoxin family. In the C-terminal section; belongs to the flavoprotein pyridine nucleotide cytochrome reductase family. In terms of assembly, alpha(8)-beta(8). The alpha component is a flavoprotein, the beta component is a hemoprotein. FAD is required as a cofactor. It depends on FMN as a cofactor.

The catalysed reaction is hydrogen sulfide + 3 NADP(+) + 3 H2O = sulfite + 3 NADPH + 4 H(+). It participates in sulfur metabolism; hydrogen sulfide biosynthesis; hydrogen sulfide from sulfite (NADPH route): step 1/1. In terms of biological role, component of the sulfite reductase complex that catalyzes the 6-electron reduction of sulfite to sulfide. This is one of several activities required for the biosynthesis of L-cysteine from sulfate. The flavoprotein component catalyzes the electron flow from NADPH -&gt; FAD -&gt; FMN to the hemoprotein component. This chain is Sulfite reductase [NADPH] flavoprotein alpha-component, found in Neisseria meningitidis serogroup C / serotype 2a (strain ATCC 700532 / DSM 15464 / FAM18).